A 511-amino-acid polypeptide reads, in one-letter code: Maturase K (511 aa).

The protein belongs to the intron maturase 2 family. MatK subfamily.

Its subcellular location is the plastid. It is found in the chloroplast. Its function is as follows. Usually encoded in the trnK tRNA gene intron. Probably assists in splicing its own and other chloroplast group II introns. The polypeptide is Maturase K (Hordeum jubatum (Foxtail barley)).